The primary structure comprises 260 residues: Protein SVS1 (260 aa).

The first 19 residues, 1-19 (MIFKILCSLLLVTSNFASA), serve as a signal peptide directing secretion. 3 N-linked (GlcNAc...) asparagine glycosylation sites follow: Asn23, Asn249, and Asn256.

Functionally, required for vanadate resistance. This Saccharomyces cerevisiae (strain ATCC 204508 / S288c) (Baker's yeast) protein is Protein SVS1 (SVS1).